Consider the following 295-residue polypeptide: Glycine N-methyltransferase (295 aa).

(6S)-5-methyl-5,6,7,8-tetrahydrofolate contacts are provided by Ser-4 and Tyr-6. Ser-10 carries the phosphoserine modification. Tyr-22, Trp-31, Tyr-34, and Arg-41 together coordinate S-adenosyl-L-methionine. Phosphotyrosine is present on Tyr-34. Position 46 is an N6-succinyllysine (Lys-46). S-adenosyl-L-methionine is bound by residues Ala-65, 86–88 (DAS), 117–118 (NW), 139–142 (LGNS), and Arg-178. 3 positions are modified to N6-succinyllysine: Lys-193, Lys-198, and Lys-203. His-217 is a (6S)-5-methyl-5,6,7,8-tetrahydrofolate binding site. Tyr-223 lines the S-adenosyl-L-methionine pocket. Arg-242 provides a ligand contact to (6S)-5-methyl-5,6,7,8-tetrahydrofolate.

It belongs to the class I-like SAM-binding methyltransferase superfamily. Glycine N-methyltransferase family. Homotetramer. In terms of tissue distribution, abundant in liver.

It localises to the cytoplasm. The enzyme catalyses glycine + S-adenosyl-L-methionine = sarcosine + S-adenosyl-L-homocysteine + H(+). With respect to regulation, inhibited by 5-methyltetrahydrofolate monoglutamate and by 5-methyltetrahydrofolate pentaglutamate, inhibition is much more effective by the pentaglutamate form than by the monoglutamate form. Two molecules of 5-methyltetrahydrofolate are bound per tetramer. The binding sites are localized between subunits. Inhibitor binding may preclude movements of the polypeptide chain that are necessary for enzyme activity. Functionally, catalyzes the methylation of glycine by using S-adenosylmethionine (AdoMet) to form N-methylglycine (sarcosine) with the concomitant production of S-adenosylhomocysteine (AdoHcy), a reaction regulated by the binding of 5-methyltetrahydrofolate. Plays an important role in the regulation of methyl group metabolism by regulating the ratio between S-adenosyl-L-methionine and S-adenosyl-L-homocysteine. This Oryctolagus cuniculus (Rabbit) protein is Glycine N-methyltransferase (GNMT).